Consider the following 165-residue polypeptide: NADPH-dependent 7-cyano-7-deazaguanine reductase (165 aa).

The active-site Thioimide intermediate is C56. D63 acts as the Proton donor in catalysis. Substrate-binding positions include 78–80 and 97–98; these read VES and HE.

Belongs to the GTP cyclohydrolase I family. QueF type 1 subfamily.

Its subcellular location is the cytoplasm. It carries out the reaction 7-aminomethyl-7-carbaguanine + 2 NADP(+) = 7-cyano-7-deazaguanine + 2 NADPH + 3 H(+). Its pathway is tRNA modification; tRNA-queuosine biosynthesis. Functionally, catalyzes the NADPH-dependent reduction of 7-cyano-7-deazaguanine (preQ0) to 7-aminomethyl-7-deazaguanine (preQ1). This is NADPH-dependent 7-cyano-7-deazaguanine reductase from Oceanobacillus iheyensis (strain DSM 14371 / CIP 107618 / JCM 11309 / KCTC 3954 / HTE831).